The following is a 149-amino-acid chain: D-aminoacyl-tRNA deacylase (149 aa).

The Gly-cisPro motif, important for rejection of L-amino acids motif lies at 137–138; it reads GP.

It belongs to the DTD family. In terms of assembly, homodimer.

The protein localises to the cytoplasm. It catalyses the reaction glycyl-tRNA(Ala) + H2O = tRNA(Ala) + glycine + H(+). The enzyme catalyses a D-aminoacyl-tRNA + H2O = a tRNA + a D-alpha-amino acid + H(+). In terms of biological role, an aminoacyl-tRNA editing enzyme that deacylates mischarged D-aminoacyl-tRNAs. Also deacylates mischarged glycyl-tRNA(Ala), protecting cells against glycine mischarging by AlaRS. Acts via tRNA-based rather than protein-based catalysis; rejects L-amino acids rather than detecting D-amino acids in the active site. By recycling D-aminoacyl-tRNA to D-amino acids and free tRNA molecules, this enzyme counteracts the toxicity associated with the formation of D-aminoacyl-tRNA entities in vivo and helps enforce protein L-homochirality. The chain is D-aminoacyl-tRNA deacylase from Alkaliphilus metalliredigens (strain QYMF).